Consider the following 427-residue polypeptide: Hydroxylamine reductase (427 aa).

[4Fe-4S] cluster is bound by residues C3, C6, C15, and C21. Residues H129, E153, C197, C283, C311, C336, E370, and K372 each coordinate hybrid [4Fe-2O-2S] cluster. At C283 the chain carries Cysteine persulfide.

It belongs to the HCP family. Requires [4Fe-4S] cluster as cofactor. The cofactor is hybrid [4Fe-2O-2S] cluster.

The protein localises to the cytoplasm. It carries out the reaction A + NH4(+) + H2O = hydroxylamine + AH2 + H(+). Its function is as follows. Catalyzes the reduction of hydroxylamine to form NH(3) and H(2)O. In Methanothermobacter thermautotrophicus (strain ATCC 29096 / DSM 1053 / JCM 10044 / NBRC 100330 / Delta H) (Methanobacterium thermoautotrophicum), this protein is Hydroxylamine reductase.